The chain runs to 529 residues: Bifunctional purine biosynthesis protein PurH (529 aa).

An MGS-like domain is found at 1–148 (MQQRRPVRRA…KNHKDVAIVV (148 aa)).

The protein belongs to the PurH family.

It catalyses the reaction (6R)-10-formyltetrahydrofolate + 5-amino-1-(5-phospho-beta-D-ribosyl)imidazole-4-carboxamide = 5-formamido-1-(5-phospho-D-ribosyl)imidazole-4-carboxamide + (6S)-5,6,7,8-tetrahydrofolate. The enzyme catalyses IMP + H2O = 5-formamido-1-(5-phospho-D-ribosyl)imidazole-4-carboxamide. It functions in the pathway purine metabolism; IMP biosynthesis via de novo pathway; 5-formamido-1-(5-phospho-D-ribosyl)imidazole-4-carboxamide from 5-amino-1-(5-phospho-D-ribosyl)imidazole-4-carboxamide (10-formyl THF route): step 1/1. Its pathway is purine metabolism; IMP biosynthesis via de novo pathway; IMP from 5-formamido-1-(5-phospho-D-ribosyl)imidazole-4-carboxamide: step 1/1. The sequence is that of Bifunctional purine biosynthesis protein PurH from Salmonella paratyphi B (strain ATCC BAA-1250 / SPB7).